The chain runs to 509 residues: Pituitary homeobox homolog Ptx1 (509 aa).

The segment covering 70-98 (NGAGSAGSAESATTTSTALSSGSTGSSTV) has biased composition (low complexity). 3 disordered regions span residues 70 to 125 (NGAG…SSVS), 148 to 171 (QDLV…PKHE), and 204 to 273 (LNNF…HFTS). Residues 227–242 (RSVNETTIKTENISSS) are compositionally biased toward polar residues. Residues 243-258 (GHDEPMTTSGEEPKND) show a composition bias toward basic and acidic residues. A compositionally biased stretch (basic residues) spans 259 to 269 (KKNKRQRRQRT). Positions 262 to 322 (KRQRRQRTHF…KNRRAKWRKR (61 aa)) form a DNA-binding region, homeobox. The OAR signature appears at 460-473 (SSIATLRLKAKQHA). The Nuclear localization signal signature appears at 464-470 (TLRLKAK).

It belongs to the paired homeobox family. Bicoid subfamily.

It is found in the nucleus. Functionally, appears to control physiological cell functions rather than pattern formation during embryogenesis. The sequence is that of Pituitary homeobox homolog Ptx1 (Ptx1) from Drosophila melanogaster (Fruit fly).